The chain runs to 85 residues: Small ribosomal subunit protein uS12m (85 aa).

It belongs to the universal ribosomal protein uS12 family.

Its subcellular location is the mitochondrion matrix. The protein resides in the kinetoplast. Functionally, protein S12 is involved in the translation initiation step. This is Small ribosomal subunit protein uS12m (RPS12) from Leishmania tarentolae (Sauroleishmania tarentolae).